The sequence spans 149 residues: Alpha-crystallin A chain (149 aa).

The sHSP domain maps to 41–149 (LFRTVLESGI…DTSYSERPIP (109 aa)). Residues His-89, Glu-91, and His-96 each coordinate Zn(2+).

It belongs to the small heat shock protein (HSP20) family. In terms of assembly, heteropolymer composed of three CRYAA and one CRYAB subunits. Inter-subunit bridging via zinc ions enhances stability, which is crucial as there is no protein turn over in the lens. Zinc coordination is achieved at least by His-89, Glu-91 and His-96. His-83 and Glu-85 come from the same molecule within the oligomer, while His-90 residue is provided by another molecule. Can also form homodimers and homotetramers (dimers of dimers) which serve as the building blocks of homooligomers.

It is found in the cytoplasm. It localises to the nucleus. Its function is as follows. Contributes to the transparency and refractive index of the lens. May act as a chaperone, preventing aggregation of various proteins under a wide range of stress conditions. This is Alpha-crystallin A chain (CRYAA) from Trachemys scripta elegans (Red-eared slider turtle).